The following is a 109-amino-acid chain: Large ribosomal subunit protein eL30 (109 aa).

The protein belongs to the eukaryotic ribosomal protein eL30 family.

In Yarrowia lipolytica (strain CLIB 122 / E 150) (Yeast), this protein is Large ribosomal subunit protein eL30 (RPL30).